Reading from the N-terminus, the 473-residue chain is Photosystem II CP43 reaction center protein (473 aa).

The propeptide occupies 1–14; that stretch reads MKTLYSLRRFYHVE. At Thr15 the chain carries N-acetylthreonine. Phosphothreonine is present on Thr15. Helical transmembrane passes span 69 to 93, 134 to 155, 178 to 200, 255 to 275, and 291 to 312; these read LFEV…PHLA, LLGP…KDRN, KALY…RKIT, KPFA…LSYS, and WFNN…ASQA. Glu367 is a [CaMn4O5] cluster binding site. The chain crosses the membrane as a helical span at residues 447 to 471; the sequence is RARAAAAGFEKGIDRDFEPVLSMTP.

It belongs to the PsbB/PsbC family. PsbC subfamily. In terms of assembly, PSII is composed of 1 copy each of membrane proteins PsbA, PsbB, PsbC, PsbD, PsbE, PsbF, PsbH, PsbI, PsbJ, PsbK, PsbL, PsbM, PsbT, PsbX, PsbY, PsbZ, Psb30/Ycf12, at least 3 peripheral proteins of the oxygen-evolving complex and a large number of cofactors. It forms dimeric complexes. Binds multiple chlorophylls and provides some of the ligands for the Ca-4Mn-5O cluster of the oxygen-evolving complex. It may also provide a ligand for a Cl- that is required for oxygen evolution. PSII binds additional chlorophylls, carotenoids and specific lipids. serves as cofactor.

The protein resides in the plastid. It localises to the chloroplast thylakoid membrane. One of the components of the core complex of photosystem II (PSII). It binds chlorophyll and helps catalyze the primary light-induced photochemical processes of PSII. PSII is a light-driven water:plastoquinone oxidoreductase, using light energy to abstract electrons from H(2)O, generating O(2) and a proton gradient subsequently used for ATP formation. This Coffea arabica (Arabian coffee) protein is Photosystem II CP43 reaction center protein.